The chain runs to 272 residues: Pyrroline-5-carboxylate reductase (272 aa).

This sequence belongs to the pyrroline-5-carboxylate reductase family.

Its subcellular location is the cytoplasm. It carries out the reaction L-proline + NADP(+) = (S)-1-pyrroline-5-carboxylate + NADPH + 2 H(+). It catalyses the reaction L-proline + NAD(+) = (S)-1-pyrroline-5-carboxylate + NADH + 2 H(+). Its pathway is amino-acid biosynthesis; L-proline biosynthesis; L-proline from L-glutamate 5-semialdehyde: step 1/1. Catalyzes the reduction of 1-pyrroline-5-carboxylate (PCA) to L-proline. In Vibrio alginolyticus, this protein is Pyrroline-5-carboxylate reductase.